A 21-amino-acid chain; its full sequence is Dahlein-5.5 (21 aa).

In terms of tissue distribution, expressed by the skin dorsal glands.

It is found in the secreted. Functionally, has no antimicrobial activity. Strongly inhibits the formation of NO by neuronal nitric oxide synthase at micromolar concentrations. This Ranoidea dahlii (Dahl's aquatic frog) protein is Dahlein-5.5.